We begin with the raw amino-acid sequence, 428 residues long: MASVSSSDQGPKTEAGCSGGGGGESSETVAASDQMLLYRGFKKAKKERGCTAKERISKMPPCTAGKRSSIYRGVTRHRWTGRYEAHLWDKSTWNQNQNKKGKQVYLGAYDDEEAAARAYDLAALKYWGPGTLINFPVTDYTRDLEEMQNLSREEYLASLRRYPFGRKSSGFSRGIAKYRGLQSRWDASASRMPGPEYFSNIHYGAGDDRGTEGDFLGSFCLERKIDLTGYIKWWGANKNRQPESSSKASEDANVEDAGTELKTLEHTSHATEPYKAPNLGVLCGTQRKEKEISSPSSSSALSILSQSPAFKSLEEKVLKIQESCNNENDENANRNIINMEKNNGKAIEKPVVSHGVALGGAAALSLQKSMYPLTSLLTAPLLTNYNTLDPLADPILWTPFLPSGSSLTSEVTKTETSCSTYSYLPQEK.

The span at 1–10 (MASVSSSDQG) shows a compositional bias: polar residues. Residues 1–28 (MASVSSSDQGPKTEAGCSGGGGGESSET) form a disordered region. The AP2/ERF DNA-binding region spans 70–136 (IYRGVTRHRW…WGPGTLINFP (67 aa)).

The protein belongs to the AP2/ERF transcription factor family. AP2 subfamily.

Its subcellular location is the nucleus. Functionally, probably acts as a transcriptional activator. Binds to the GCC-box pathogenesis-related promoter element. May be involved in the regulation of gene expression by stress factors and by components of stress signal transduction pathways. The protein is AP2-like ethylene-responsive transcription factor At2g41710 of Arabidopsis thaliana (Mouse-ear cress).